A 192-amino-acid polypeptide reads, in one-letter code: Orotate phosphoribosyltransferase (192 aa).

5-phospho-alpha-D-ribose 1-diphosphate is bound at residue 116 to 124; the sequence is EDIVTTGLS. Residues Thr-120 and Arg-148 each contribute to the orotate site.

The protein belongs to the purine/pyrimidine phosphoribosyltransferase family. PyrE subfamily. In terms of assembly, homodimer. The cofactor is Mg(2+).

It catalyses the reaction orotidine 5'-phosphate + diphosphate = orotate + 5-phospho-alpha-D-ribose 1-diphosphate. It participates in pyrimidine metabolism; UMP biosynthesis via de novo pathway; UMP from orotate: step 1/2. Functionally, catalyzes the transfer of a ribosyl phosphate group from 5-phosphoribose 1-diphosphate to orotate, leading to the formation of orotidine monophosphate (OMP). The chain is Orotate phosphoribosyltransferase from Brucella abortus (strain S19).